A 2710-amino-acid polypeptide reads, in one-letter code: Serine/threonine-protein kinase ATR (2710 aa).

The FAT domain occupies 1647–2257 (TLAKASFRCQ…LWMMAAVSKS (611 aa)). The PI3K/PI4K catalytic domain occupies 2368 to 2680 (IADDAEILNS…GVNAAPSLPL (313 aa)). The tract at residues 2374–2380 (ILNSLQK) is G-loop. The catalytic loop stretch occupies residues 2545–2553 (GLGDRHGEN). Positions 2565 to 2589 (HVDFSCLFDKGLLLEKPEVVPFRFT) are activation loop. The 33-residue stretch at 2678-2710 (LPLSVEGQARRLIAEAVSHSNLGKMYVWWMAWF) folds into the FATC domain.

It belongs to the PI3/PI4-kinase family. ATM subfamily.

It is found in the nucleus. The catalysed reaction is L-seryl-[protein] + ATP = O-phospho-L-seryl-[protein] + ADP + H(+). The enzyme catalyses L-threonyl-[protein] + ATP = O-phospho-L-threonyl-[protein] + ADP + H(+). Functionally, probable serine/threonine kinase. Seems to play a central role in cell-cycle regulation by transmitting DNA damage signals to downstream effectors of cell-cycle progression. May recognize the substrate consensus sequence [ST]-Q and phosphorylate histone variant H2AX to form H2AXS139ph at sites of DNA damage, thereby regulating DNA damage response mechanism. This is Serine/threonine-protein kinase ATR from Oryza sativa subsp. indica (Rice).